Reading from the N-terminus, the 83-residue chain is Small ribosomal subunit protein bS16 (83 aa).

Belongs to the bacterial ribosomal protein bS16 family.

This Pseudomonas fluorescens (strain SBW25) protein is Small ribosomal subunit protein bS16.